We begin with the raw amino-acid sequence, 205 residues long: MSFTGTLDKCNVCDKTVYVVDMLSIEGMPYHKSCFRCTHCKGTLQMSNYSSMDGVLYCKTHFEQLFKESGNFSKNFQPGKTEKPELTRTPSKISSIFCGTQDKCAACEKTVYPLEKIQMEGECFHKTCFRCAHGGCTLTHSSYASLDSVLYCRHHFNQLFMEKGNYAHVLQAANHRRTASGNTLPPEPTEDVAVEAKEENGVSES.

LIM zinc-binding domains lie at 8-68 (DKCN…LFKE) and 102-162 (DKCA…LFME). The interval 177–205 (RTASGNTLPPEPTEDVAVEAKEENGVSES) is disordered. The segment covering 194–205 (VEAKEENGVSES) has biased composition (basic and acidic residues).

Interacts with F-actin. As to expression, predominantly expressed in flowers and in pollen grains. Detected in vasculature and roots.

The protein resides in the cytoplasm. It localises to the cytoskeleton. Its function is as follows. Binds to actin filaments and promotes cross-linking into thick bundles. Has an actin-stabilizing activity. The actin regulatory activities are inhibited by pH &gt; 6.8 but are [Ca(2+)] independent. The polypeptide is LIM domain-containing protein PLIM2b (Arabidopsis thaliana (Mouse-ear cress)).